A 392-amino-acid chain; its full sequence is 8-amino-7-oxononanoate synthase (392 aa).

A pyridoxal 5'-phosphate-binding site is contributed by 108-109; it reads GF. Histidine 133 contacts substrate. Residues serine 180, 205–208, and 236–239 each bind pyridoxal 5'-phosphate; these read DDAH and TLSK. An N6-(pyridoxal phosphate)lysine modification is found at lysine 239. Residue threonine 353 participates in substrate binding.

The protein belongs to the class-II pyridoxal-phosphate-dependent aminotransferase family. BioF subfamily. As to quaternary structure, homodimer. The cofactor is pyridoxal 5'-phosphate.

The catalysed reaction is 6-carboxyhexanoyl-[ACP] + L-alanine + H(+) = (8S)-8-amino-7-oxononanoate + holo-[ACP] + CO2. It functions in the pathway cofactor biosynthesis; biotin biosynthesis. Its function is as follows. Catalyzes the decarboxylative condensation of pimeloyl-[acyl-carrier protein] and L-alanine to produce 8-amino-7-oxononanoate (AON), [acyl-carrier protein], and carbon dioxide. The chain is 8-amino-7-oxononanoate synthase from Bacillus pumilus (strain SAFR-032).